The following is a 504-amino-acid chain: Kinesin light chain 3 (504 aa).

The stretch at 90–150 (ALSAHVGALE…EEEKRHLEFL (61 aa)) forms a coiled coil. The interval 153 to 197 (LRQYDPPAESQQSESPPRRDSLASLFPSEEEERKGPEAAGAAAAQ) is disordered. Low complexity predominate over residues 158-167 (PPAESQQSES). Ser-173 is modified (phosphoserine). 5 TPR repeats span residues 207–240 (LRTL…LERS), 249–282 (ATML…REQT), 291–324 (AATL…REKV), 333–366 (AKQL…YEAL), and 375–408 (AKTK…EDLP). The tract at residues 411–438 (LGAPNTGTAGDAEQALRRSSSLSKIRES) is disordered. Ser-466 carries the post-translational modification Phosphoserine. Residues 472-504 (VDAPRAPGTQFPSWHLDKAPRTLSASTQDLSPH) are disordered. Positions 494–504 (LSASTQDLSPH) are enriched in polar residues. Thr-498 carries the phosphothreonine modification. Ser-502 bears the Phosphoserine mark.

The protein belongs to the kinesin light chain family. As to quaternary structure, oligomer composed of two heavy chains and two light chains. Associates with microtubulin in an ATP-dependent manner. Interacts with KIF5C. Interacts with ODF1. Interacts with LRGUK. Interacts with VDAC2.

The protein localises to the cytoplasm. It localises to the cytoskeleton. It is found in the mitochondrion. In terms of biological role, kinesin is a microtubule-associated force-producing protein that may play a role in organelle transport. Plays a role during spermiogenesis in the development of the sperm tail midpiece and in the normal function of spermatozoa. May play a role in the formation of the mitochondrial sheath formation in the developing spermatid midpiece. This Homo sapiens (Human) protein is Kinesin light chain 3 (KLC3).